The sequence spans 874 residues: MSALSRWLLIPPVSARLSERYQGYRRHGASPFSAALGCLWTILAWIVFPLEHPRWQRIRDGHKALYPHINAARPRPLDPARYLIQTLWLVMISSTKERHEPRWRSFARLKDVRGRYHQWMDTLPERVRQKTTHLEKEKELGHLSNGARRFILGVIVTFSLILALICITQPFNPLSQFIFLLLLWGVALLVRRMPGRFSALMLIVLSLTVSCRYIWWRYTSTLNWDDPVSLVCGLILLFAETYAWIVLVLGYFQVVWPLNRQPVPLPKEMSQWPTVDIFVPTYNEDLNVVKNTIYASLGIDWPKDKLNIWILDDGGRESFRHFARHVGVHYIARTTHEHAKAGNINNALKHAKGEFVAIFDCDHVPTRSFLQMTMGWFLKEKQLAMMQTPHHFFSPDPFERNLGRFRKTPNEGTLFYGLVQDGNDMWDATFFCGSCAVIRRKPLDEIGGIAVETVTEDAHTSLRLHRRGYTSAYMRIPQAAGLATESLSAHIGQRIRWARGMVQIFRLDNPLFGKGLKLAQRLCYLNAMFHFLSGIPRLIFLTAPLAFLLLHAYIIYAPALMIALFVIPHMVHASLTNSKIQGKYRHSFWSEIYETVLAWYIAPPTLVALINPHKGKFNVTAKGGLVEEKYVDWVISRPYIFLVLLNLLGVAAGVWRYYYGPENETLTVIVSLVWVFYNLVILGGAVAVSVESKQVRRAHRVEIAMPGAIAREDGHLFSCTVHDFSDGGLGIKINGQAQVLEGQKVNLLLKRGQQEYVFPTQVVRVTGNEVGLQLMPLTTKQHIDFVQCTFARADTWALWQDSFPEDKPLESLLDILKLGFRGYRHLAEFAPPSVKVIFRSLTALIAWIVSFIPRRPERQAAIQPSDRVMAQAQQ.

Helical transmembrane passes span 30 to 50, 151 to 171, 173 to 193, and 230 to 250; these read SPFS…VFPL, ILGV…TQPF, PLSQ…VRRM, and LVCG…LVLG. The interval 271 to 364 is catalytic subdomain A; it reads QWPTVDIFVP…FVAIFDCDHV (94 aa). The active site involves Asp313. Substrate-binding residues include Asp360 and Asp362. Residues 441-501 are catalytic subdomain B; sequence KPLDEIGGIA…GQRIRWARGM (61 aa). Residue Asp457 is part of the active site. Helical transmembrane passes span 525-545, 547-567, 592-612, 634-654, and 668-688; these read LNAM…TAPL, FLLL…LFVI, IYET…LINP, VISR…AAGV, and VIVS…AVAV. The region spanning 694-790 is the PilZ domain; sequence QVRRAHRVEI…QHIDFVQCTF (97 aa). Residues 833–853 form a helical membrane-spanning segment; that stretch reads SVKVIFRSLTALIAWIVSFIP.

Belongs to the glycosyltransferase 2 family. Mg(2+) is required as a cofactor.

Its subcellular location is the cell inner membrane. It carries out the reaction [(1-&gt;4)-beta-D-glucosyl](n) + UDP-alpha-D-glucose = [(1-&gt;4)-beta-D-glucosyl](n+1) + UDP + H(+). Its pathway is glycan metabolism; bacterial cellulose biosynthesis. Its activity is regulated as follows. Activated by bis-(3'-5') cyclic diguanylic acid (c-di-GMP). In terms of biological role, catalytic subunit of cellulose synthase. It polymerizes uridine 5'-diphosphate glucose to cellulose, which is produced as an extracellular component for mechanical and chemical protection at the onset of the stationary phase, when the cells exhibit multicellular behavior (rdar morphotype). Coexpression of cellulose and thin aggregative fimbriae leads to a hydrophobic network with tightly packed cells embedded in a highly inert matrix. The protein is Cellulose synthase catalytic subunit [UDP-forming] (bcsA) of Salmonella typhimurium (strain LT2 / SGSC1412 / ATCC 700720).